The sequence spans 195 residues: Putative manganese efflux pump MntP (195 aa).

6 helical membrane-spanning segments follow: residues Ile-4 to Met-24, Phe-39 to Leu-59, Phe-64 to Met-84, Ile-120 to Thr-140, Ile-145 to Ala-165, and Gly-175 to Val-195.

The protein belongs to the MntP (TC 9.B.29) family.

It localises to the cell membrane. Probably functions as a manganese efflux pump. This is Putative manganese efflux pump MntP from Syntrophomonas wolfei subsp. wolfei (strain DSM 2245B / Goettingen).